A 164-amino-acid chain; its full sequence is Peptide deformylase (164 aa).

The Fe cation site is built by Cys87 and His129. Residue Glu130 is part of the active site. His133 lines the Fe cation pocket.

This sequence belongs to the polypeptide deformylase family. Requires Fe(2+) as cofactor.

It carries out the reaction N-terminal N-formyl-L-methionyl-[peptide] + H2O = N-terminal L-methionyl-[peptide] + formate. Its function is as follows. Removes the formyl group from the N-terminal Met of newly synthesized proteins. Requires at least a dipeptide for an efficient rate of reaction. N-terminal L-methionine is a prerequisite for activity but the enzyme has broad specificity at other positions. This is Peptide deformylase from Thermotoga maritima (strain ATCC 43589 / DSM 3109 / JCM 10099 / NBRC 100826 / MSB8).